A 231-amino-acid polypeptide reads, in one-letter code: MVIHDLPLKLKDFPMKEKPRERLLKVGAENLANHELLAILLRTGTKHESVLDLSNRLLRSFDGLRLLKEASVEELSSIPGIGMVKAIQILAAVELGSRIHKLANEEHFVIRSPEDGANLVMEDMRFLTQEHFVCLYLNTKNQVIHKRTVFIGSLNSSIVHPREVFKEAFKRSAASFICVHNHPSGDPTPSREDIEVTRRLFECGNLIGIELLDHLVIGDKKFVSLKEKGYL.

The MPN domain occupies 109–231 (VIRSPEDGAN…FVSLKEKGYL (123 aa)). Positions 180, 182, and 193 each coordinate Zn(2+). The JAMM motif signature appears at 180 to 193 (HNHPSGDPTPSRED).

Belongs to the UPF0758 family.

The polypeptide is UPF0758 protein YsxA (ysxA) (Bacillus subtilis (strain 168)).